Consider the following 110-residue polypeptide: MSSDDKNKPGEPKNEPKQCDPGCEQKCETKCQPSCLKRLLQRCSEKCQPPKCPPPKCTPCPPCPPSCPPPPKCPPPCPPPCPPPCPPPCPPKPCVKSCPPKCPPPCPPPE.

Residues 1-24 (MSSDDKNKPGEPKNEPKQCDPGCE) form a disordered region.

This sequence belongs to the cornifin (SPRR) family.

The sequence is that of Late cornified envelope-like proline-rich protein 1 (LELP1) from Bos taurus (Bovine).